A 223-amino-acid chain; its full sequence is Glutathione S-transferase Z2 (223 aa).

Positions 10–91 (AKLKLYSYWR…YLDDKYPEPP (82 aa)) constitute a GST N-terminal domain. Residues 20–21 (SS), 20–25 (SSCAHR), Gln49, 49–50 (QS), 62–63 (TV), Val63, 75–76 (DS), Gln115, and 119–121 (NMA) each bind glutathione. The 126-residue stretch at 96-221 (DYHKRAVNYQ…VPEKQPDTPS (126 aa)) folds into the GST C-terminal domain.

The protein belongs to the GST superfamily. Zeta family.

Its subcellular location is the cytoplasm. The protein localises to the cytosol. It carries out the reaction RX + glutathione = an S-substituted glutathione + a halide anion + H(+). Its function is as follows. May be involved in the conjugation of reduced glutathione to a wide number of exogenous and endogenous hydrophobic electrophiles and have a detoxification role against certain herbicides. The chain is Glutathione S-transferase Z2 (GSTZ2) from Arabidopsis thaliana (Mouse-ear cress).